The primary structure comprises 393 residues: Phosphatidate cytidylyltransferase (393 aa).

The next 8 membrane-spanning stretches (helical) occupy residues 49 to 69, 73 to 93, 108 to 128, 141 to 161, 171 to 191, 198 to 218, 237 to 257, and 290 to 310; these read NFFR…WISV, IYSF…IIGI, IILG…IMMM, LSFV…ASLR, LFAL…CAIF, FWFV…YVVG, GFIG…HLHV, and IHII…GFLA.

The protein belongs to the CDS family.

The protein resides in the membrane. It carries out the reaction a 1,2-diacyl-sn-glycero-3-phosphate + CTP + H(+) = a CDP-1,2-diacyl-sn-glycerol + diphosphate. It participates in phospholipid metabolism; CDP-diacylglycerol biosynthesis; CDP-diacylglycerol from sn-glycerol 3-phosphate: step 3/3. The chain is Phosphatidate cytidylyltransferase (CDS1) from Encephalitozoon cuniculi (strain GB-M1) (Microsporidian parasite).